The primary structure comprises 186 residues: Quinone reductase (186 aa).

FMN contacts are provided by residues 13 to 20, 80 to 83, and Ser116; these read SLRKESYN and EHNR.

The protein belongs to the SsuE family. As to quaternary structure, homotetramer. Dimer of dimers. The tetrameric configuration has a central role in chromate reductase activity. The cofactor is FMN.

The enzyme catalyses a quinone + NADH + H(+) = a quinol + NAD(+). The catalysed reaction is a quinone + NADPH + H(+) = a quinol + NADP(+). It catalyses the reaction Cr(6+) + 2 NADH + O2 = Cr(3+) + superoxide + 2 NAD(+) + 2 H(+). It carries out the reaction Cr(6+) + 2 NADPH + O2 = Cr(3+) + superoxide + 2 NADP(+) + 2 H(+). Its activity is regulated as follows. Non-competitively inhibited by sulfate. Catalyzes the reduction of quinones. Acts by simultaneous two-electron transfer, avoiding formation of highly reactive semiquinone intermediates and producing quinols that promote tolerance of H(2)O(2). Quinone reduction is probably the primary biological role of ChrR. Can also reduce toxic chromate to insoluble and less toxic Cr(3+). Catalyzes the transfer of three electrons to Cr(6+) producing Cr(3+) and one electron to molecular oxygen. This reaction produces transiently a minimal amount of the toxic Cr(5+) species and reactive oxygen species (ROS). Chromate reduction protects the cell against chromate toxicity, but is likely a secondary activity. The chain is Quinone reductase (chrR) from Pseudomonas putida (Arthrobacter siderocapsulatus).